A 372-amino-acid chain; its full sequence is tRNA-specific 2-thiouridylase MnmA (372 aa).

ATP contacts are provided by residues G16–S23 and M42. Residues N102–D104 form an interaction with target base in tRNA region. C107 functions as the Nucleophile in the catalytic mechanism. Cysteines 107 and 205 form a disulfide. G132 is a binding site for ATP. An interaction with tRNA region spans residues K155 to Q157. The active-site Cysteine persulfide intermediate is the C205. Residues R317 to Y318 form an interaction with tRNA region.

This sequence belongs to the MnmA/TRMU family.

The protein localises to the cytoplasm. It carries out the reaction S-sulfanyl-L-cysteinyl-[protein] + uridine(34) in tRNA + AH2 + ATP = 2-thiouridine(34) in tRNA + L-cysteinyl-[protein] + A + AMP + diphosphate + H(+). Functionally, catalyzes the 2-thiolation of uridine at the wobble position (U34) of tRNA, leading to the formation of s(2)U34. The polypeptide is tRNA-specific 2-thiouridylase MnmA (Shewanella sp. (strain MR-4)).